The following is a 352-amino-acid chain: Cell division protein ZipA (352 aa).

Residues 1 to 6 lie on the Periplasmic side of the membrane; it reads MKDLQL. A helical transmembrane segment spans residues 7-27; the sequence is VLFVLGAIAIIAVLVHGFWSI. Over 28-352 the chain is Cytoplasmic; it reads RKQQPKSMKQ…KDYLRRLNAA (325 aa). 2 disordered regions span residues 78-120 and 138-160; these read KPVL…HVEP and PAPT…TSTA. Polar residues predominate over residues 83–105; the sequence is TNLSQKPHSGTTKLTDTPLQDSL. Over residues 111 to 120 the composition is skewed to basic and acidic residues; that stretch reads HKTEPEHVEP. The segment covering 141–160 has biased composition (polar residues); the sequence is TASTSMNTPKKIFNPSTSTA.

It belongs to the ZipA family. As to quaternary structure, interacts with FtsZ via their C-terminal domains.

It localises to the cell inner membrane. Functionally, essential cell division protein that stabilizes the FtsZ protofilaments by cross-linking them and that serves as a cytoplasmic membrane anchor for the Z ring. Also required for the recruitment to the septal ring of downstream cell division proteins. The sequence is that of Cell division protein ZipA from Shewanella frigidimarina (strain NCIMB 400).